Here is a 148-residue protein sequence, read N- to C-terminus: Large ribosomal subunit protein uL15 (148 aa).

A compositionally biased stretch (basic and acidic residues) spans 1–11 (MSEPIKLHDLR). The tract at residues 1 to 52 (MSEPIKLHDLRPAAGSNKAKTRVGRGEASKGKTAGRGTKGTKARKQVSAAFE) is disordered.

The protein belongs to the universal ribosomal protein uL15 family. In terms of assembly, part of the 50S ribosomal subunit.

Functionally, binds to the 23S rRNA. The protein is Large ribosomal subunit protein uL15 of Corynebacterium glutamicum (strain R).